Reading from the N-terminus, the 502-residue chain is Glucose-6-phosphate isomerase (502 aa).

Glu-331 (proton donor) is an active-site residue. Catalysis depends on residues His-362 and Lys-471.

The protein belongs to the GPI family.

The protein resides in the cytoplasm. The enzyme catalyses alpha-D-glucose 6-phosphate = beta-D-fructose 6-phosphate. It functions in the pathway carbohydrate biosynthesis; gluconeogenesis. Its pathway is carbohydrate degradation; glycolysis; D-glyceraldehyde 3-phosphate and glycerone phosphate from D-glucose: step 2/4. Catalyzes the reversible isomerization of glucose-6-phosphate to fructose-6-phosphate. This chain is Glucose-6-phosphate isomerase, found in Xylella fastidiosa (strain 9a5c).